The primary structure comprises 229 residues: UPF0128 protein aq_756 (229 aa).

Belongs to the UPF0128 family.

This Aquifex aeolicus (strain VF5) protein is UPF0128 protein aq_756.